Consider the following 190-residue polypeptide: Segregation and condensation protein B (190 aa).

The protein belongs to the ScpB family. Homodimer. Homodimerization may be required to stabilize the binding of ScpA to the Smc head domains. Component of a cohesin-like complex composed of ScpA, ScpB and the Smc homodimer, in which ScpA and ScpB bind to the head domain of Smc. The presence of the three proteins is required for the association of the complex with DNA.

It localises to the cytoplasm. Participates in chromosomal partition during cell division. May act via the formation of a condensin-like complex containing Smc and ScpA that pull DNA away from mid-cell into both cell halves. This is Segregation and condensation protein B from Bacillus mycoides (strain KBAB4) (Bacillus weihenstephanensis).